A 283-amino-acid chain; its full sequence is Peroxisome biogenesis protein 22 (283 aa).

N-acetylalanine is present on alanine 2. A helical membrane pass occupies residues 45–62 (IGAIAGLAIAVIFTWRAI). A disordered region spans residues 66–107 (GEQRQRRQPKRRIHNAETSSAAAAASQSNLASSVAPEVSSPR). A compositionally biased stretch (low complexity) spans 81–100 (AETSSAAAAASQSNLASSVA).

Belongs to the peroxin-22 family. Interacts with PEX4.

The protein localises to the peroxisome membrane. In terms of biological role, may be tethered PEX4 to the peroxisome membrane and may be involved in a late step of the matrix protein import. Does not play a role in the biogenesis of the peroxisomal membrane. This chain is Peroxisome biogenesis protein 22 (PEX22), found in Arabidopsis thaliana (Mouse-ear cress).